The primary structure comprises 720 residues: Heat shock protein homolog pss1 (720 aa).

Position 38 is a phosphoserine (Ser38). At Thr39 the chain carries Phosphothreonine. Over residues 658–690 the composition is skewed to basic and acidic residues; that stretch reads KRQKVQAEREAAKAATKSEAEKQKPSGKFEEGT. The disordered stretch occupies residues 658–720; sequence KRQKVQAERE…ETMEIDEQKE (63 aa). A compositionally biased stretch (acidic residues) spans 703-720; the sequence is VAPENEEVETMEIDEQKE.

Belongs to the heat shock protein 70 family.

It localises to the cytoplasm. Required for normal growth at various temperatures. In Schizosaccharomyces pombe (strain 972 / ATCC 24843) (Fission yeast), this protein is Heat shock protein homolog pss1 (pss1).